The sequence spans 239 residues: Octanoyl-[acyl-carrier-protein]:protein N-octanoyltransferase LIPT2, mitochondrial (239 aa).

Residues 1 to 18 (MSVPVLRVRRLGLVGYAE) constitute a mitochondrion transit peptide. The region spanning 37–217 (GSPGGALLLC…AFEEEFQCQL (181 aa)) is the BPL/LPL catalytic domain. Substrate-binding positions include 81–88 (RGGLITFH), 147–149 (AIG), and 160–162 (GLA). The active-site Acyl-thioester intermediate is the C178. Residues 220 to 239 (EQNPEQNPVQNRPDRDAGPL) form a disordered region.

The protein belongs to the LipB family.

Its subcellular location is the mitochondrion. The enzyme catalyses octanoyl-[ACP] + L-lysyl-[protein] = N(6)-octanoyl-L-lysyl-[protein] + holo-[ACP] + H(+). The protein operates within protein modification; protein lipoylation via endogenous pathway; protein N(6)-(lipoyl)lysine from octanoyl-[acyl-carrier-protein]: step 1/2. Its function is as follows. Catalyzes the transfer of endogenously produced octanoic acid from octanoyl-acyl-carrier-protein (octanoyl-ACP) onto the lipoyl domains of lipoate-dependent enzymes such as the protein H of the glycine cleavage system (GCSH). Lipoyl-ACP can also act as a substrate although octanoyl-ACP is likely to be the physiological substrate. This chain is Octanoyl-[acyl-carrier-protein]:protein N-octanoyltransferase LIPT2, mitochondrial (lipt2), found in Xenopus tropicalis (Western clawed frog).